A 155-amino-acid polypeptide reads, in one-letter code: Protein-export protein SecB (155 aa).

The protein belongs to the SecB family. Homotetramer, a dimer of dimers. One homotetramer interacts with 1 SecA dimer.

It is found in the cytoplasm. Its function is as follows. One of the proteins required for the normal export of preproteins out of the cell cytoplasm. It is a molecular chaperone that binds to a subset of precursor proteins, maintaining them in a translocation-competent state. It also specifically binds to its receptor SecA. This chain is Protein-export protein SecB, found in Salmonella heidelberg (strain SL476).